The following is a 470-amino-acid chain: Myricetin 3-O-rhamnoside 1,2-glucosyltransferase UGT709G2 (470 aa).

The active-site Proton acceptor is H20. H20 is an an anthocyanidin binding site. D117 functions as the Charge relay in the catalytic mechanism. A340, Q342, H357, W360, N361, S362, and E365 together coordinate UDP-alpha-D-glucose. An anthocyanidin is bound at residue A380. Positions 381 and 382 each coordinate UDP-alpha-D-glucose.

This sequence belongs to the UDP-glycosyltransferase family. Expressed in young cromes.

It carries out the reaction myricetin 3-O-alpha-L-rhamnoside + UDP-alpha-D-glucose = myricetin 3-O-[beta-D-glucosyl-(1-&gt;2)-alpha-L-rhamnoside] + UDP + H(+). Its pathway is flavonoid metabolism. In terms of biological role, glucosyltransferase involved in montbretin A (MbA) biosynthesis. Catalyzes the glucosylation of myricetin 3-O-alpha-L-rhamnoside (MR) to produce myricetin 3-O-[beta-D-glucosyl-(1-&gt;2)-alpha-L-rhamnoside] (MRG), a precursor of MbA. MbA is a potent inhibitor of human pancreatic alpha-amylase and is being developed as drug candidate to treat type-2 diabetes. In vitro, is able to transfer UDP-xylose with 50-fold less efficiency compared with UDP-glucose. In vitro, can use myricetin 3-O-glucoside and quercetin 3-O-glucoside as substrates, although these two flavonoids may not be physiological substrates in vivo. In Crocosmia x crocosmiiflora (Montbretia), this protein is Myricetin 3-O-rhamnoside 1,2-glucosyltransferase UGT709G2.